A 695-amino-acid chain; its full sequence is Calcium-binding acidic-repeat protein (695 aa).

Positions 1–20 (MSHLWCWLFLVLCLACLVLS) form a signal peptide, or 23. 6 TSP type-3 repeats span residues 24–38 (KDSD…DEIN), 47–56 (ADSDQDGLTD), 70–82 (KDTD…DGVE), 184–196 (GDSD…DGAE), 202–214 (KDSD…DEEE), and 248–260 (GDSD…DGAE). Residues 45-695 (YNADSDQDGL…TDPWRSDHSV (651 aa)) are disordered. Positions 59–70 (EVNRHQTHPQDK) are enriched in basic and acidic residues. Acidic residues-rich tracts occupy residues 271–283 (ADSD…DGEE), 291–306 (PEDP…DGDE), and 313–324 (DPEEDDSDEDGV). TSP type-3 repeat units lie at residues 294–308 (PDSD…DEVN), 317–329 (DDSD…DGAE), 340–352 (EDSD…DGAE), 363–375 (EDSD…DGAE), 379–393 (TDSD…DEVA), 402–414 (ADSD…DGAE), 425–437 (KDTD…DGVE), 470–482 (EDTD…DGAE), 493–505 (ADTD…DGAE), 516–528 (ADSD…DGAE), 539–551 (GDSD…DAAE), 555–569 (KDSD…DEVR), 600–609 (RDTDGDGVAD), 623–635 (ADTD…DGAE), and 646–658 (ADSD…DGAE). 2 stretches are compositionally biased toward acidic residues: residues 361–370 (NDEDSDDDGI) and 381–392 (SDGDGLPDEDEV). Composition is skewed to acidic residues over residues 467–477 (PNDEDTDDDGL) and 491–500 (EDADTDDDGL). Over residues 537 to 546 (NDGDSDDDGV) the composition is skewed to acidic residues. A compositionally biased stretch (basic and acidic residues) spans 589-603 (EILKHKTDPRNRDTD). Over residues 665 to 679 (NAKDGDSDDDGKADG) the composition is skewed to basic and acidic residues.

Its subcellular location is the secreted. It is found in the endoplasmic reticulum. Functionally, may function as a calcium-binding protein. The chain is Calcium-binding acidic-repeat protein from Euglena gracilis.